Here is a 335-residue protein sequence, read N- to C-terminus: Holliday junction branch migration complex subunit RuvB (335 aa).

The segment at 1 to 181 (MERIVEVEKF…FGMHFRLQFY (181 aa)) is large ATPase domain (RuvB-L). ATP is bound by residues Leu-20, Arg-21, Gly-62, Lys-65, Thr-66, Thr-67, 128–130 (EDF), Arg-171, Tyr-181, and Arg-218. Residue Thr-66 participates in Mg(2+) binding. A small ATPAse domain (RuvB-S) region spans residues 182-252 (TPQELAQIIT…RTQKALEALG (71 aa)). Residues 255–335 (ERGFDELDLK…LTPNIQNSLF (81 aa)) are head domain (RuvB-H). Residues Arg-309 and Arg-314 each contribute to the DNA site.

This sequence belongs to the RuvB family. In terms of assembly, homohexamer. Forms an RuvA(8)-RuvB(12)-Holliday junction (HJ) complex. HJ DNA is sandwiched between 2 RuvA tetramers; dsDNA enters through RuvA and exits via RuvB. An RuvB hexamer assembles on each DNA strand where it exits the tetramer. Each RuvB hexamer is contacted by two RuvA subunits (via domain III) on 2 adjacent RuvB subunits; this complex drives branch migration. In the full resolvosome a probable DNA-RuvA(4)-RuvB(12)-RuvC(2) complex forms which resolves the HJ.

The protein resides in the cytoplasm. The catalysed reaction is ATP + H2O = ADP + phosphate + H(+). Functionally, the RuvA-RuvB-RuvC complex processes Holliday junction (HJ) DNA during genetic recombination and DNA repair, while the RuvA-RuvB complex plays an important role in the rescue of blocked DNA replication forks via replication fork reversal (RFR). RuvA specifically binds to HJ cruciform DNA, conferring on it an open structure. The RuvB hexamer acts as an ATP-dependent pump, pulling dsDNA into and through the RuvAB complex. RuvB forms 2 homohexamers on either side of HJ DNA bound by 1 or 2 RuvA tetramers; 4 subunits per hexamer contact DNA at a time. Coordinated motions by a converter formed by DNA-disengaged RuvB subunits stimulates ATP hydrolysis and nucleotide exchange. Immobilization of the converter enables RuvB to convert the ATP-contained energy into a lever motion, pulling 2 nucleotides of DNA out of the RuvA tetramer per ATP hydrolyzed, thus driving DNA branch migration. The RuvB motors rotate together with the DNA substrate, which together with the progressing nucleotide cycle form the mechanistic basis for DNA recombination by continuous HJ branch migration. Branch migration allows RuvC to scan DNA until it finds its consensus sequence, where it cleaves and resolves cruciform DNA. This Nitratiruptor sp. (strain SB155-2) protein is Holliday junction branch migration complex subunit RuvB.